A 127-amino-acid chain; its full sequence is Small ribosomal subunit protein uS12m (127 aa).

It belongs to the universal ribosomal protein uS12 family.

Its subcellular location is the mitochondrion. The protein is Small ribosomal subunit protein uS12m (RPS12) of Acanthamoeba castellanii (Amoeba).